Consider the following 347-residue polypeptide: Transcription elongation factor A protein 3 (347 aa).

The TFIIS N-terminal domain occupies 5-82 (EELLRIAKKL…KNWKRLLDSP (78 aa)). Positions 83–100 (RTTKGEREEREKAKKEKG) are enriched in basic and acidic residues. Residues 83–168 (RTTKGEREER…TTPSSPSTPT (86 aa)) form a disordered region. A Phosphoserine modification is found at S113. A compositionally biased stretch (basic and acidic residues) spans 119–131 (GGGEPKTRRDSVD). 2 stretches are compositionally biased toward low complexity: residues 132–142 (SRSSTTSSPKR) and 157–168 (TPTTPSSPSTPT). At S139 the chain carries Phosphoserine. Residues 186–302 (VRDKCVEMLS…EHQMAKTGGT (117 aa)) form the TFIIS central domain. The TFIIS-type zinc-finger motif lies at 305-345 (DLLRCSKCKKKNCTYNQVQTRSADEPMTTFVLCNECGNRWK). Zn(2+) is bound by residues C309, C312, C337, and C340.

This sequence belongs to the TFS-II family. As to expression, liver, kidney and heart.

The protein resides in the nucleus. In terms of biological role, necessary for efficient RNA polymerase II transcription elongation past template-encoded arresting sites. The arresting sites in DNA have the property of trapping a certain fraction of elongating RNA polymerases that pass through, resulting in locked ternary complexes. Cleavage of the nascent transcript by S-II allows the resumption of elongation from the new 3'-terminus. This is Transcription elongation factor A protein 3 (Tcea3) from Mus musculus (Mouse).